A 233-amino-acid chain; its full sequence is MNHLNKLMERLGHQFNNLELLKIALTHRSSGADNNERLEFLGDSVLGFIIASELYQRRPQAREGDLSRMRASMVNGDELAQMSTKLGINEYLQLGVGEQKSGGKRRRSILADALEAIVGAIYIDAGLETCRRCVLNWYGERVDDLSKLSPKKDAKSLLQEWLQARRLPLPTYEVKITGEAHAQTFTVNCYVKGLPHKTEGVNTTRRRAEQIAAKRFLELLDDGKGDGITERDQ.

Residues 4 to 126 form the RNase III domain; the sequence is LNKLMERLGH…IVGAIYIDAG (123 aa). Residue Glu39 coordinates Mg(2+). Asp43 is a catalytic residue. Mg(2+) is bound by residues Asp112 and Glu115. Residue Glu115 is part of the active site. One can recognise a DRBM domain in the interval 153–222; it reads DAKSLLQEWL…AKRFLELLDD (70 aa).

The protein belongs to the ribonuclease III family. Homodimer. Requires Mg(2+) as cofactor.

The protein resides in the cytoplasm. The enzyme catalyses Endonucleolytic cleavage to 5'-phosphomonoester.. Digests double-stranded RNA. Involved in the processing of primary rRNA transcript to yield the immediate precursors to the large and small rRNAs (23S and 16S). Processes some mRNAs, and tRNAs when they are encoded in the rRNA operon. Processes pre-crRNA and tracrRNA of type II CRISPR loci if present in the organism. The sequence is that of Ribonuclease 3 from Coxiella burnetii (strain Dugway 5J108-111).